Consider the following 457-residue polypeptide: NADH-quinone oxidoreductase subunit D (457 aa).

The interval 1-23 (MSTHTETPVDGSAETITGAQPYE) is disordered.

It belongs to the complex I 49 kDa subunit family. NDH-1 is composed of 14 different subunits. Subunits NuoB, C, D, E, F, and G constitute the peripheral sector of the complex.

It localises to the cell membrane. The enzyme catalyses a quinone + NADH + 5 H(+)(in) = a quinol + NAD(+) + 4 H(+)(out). Functionally, NDH-1 shuttles electrons from NADH, via FMN and iron-sulfur (Fe-S) centers, to quinones in the respiratory chain. The immediate electron acceptor for the enzyme in this species is believed to be a menaquinone. Couples the redox reaction to proton translocation (for every two electrons transferred, four hydrogen ions are translocated across the cytoplasmic membrane), and thus conserves the redox energy in a proton gradient. The protein is NADH-quinone oxidoreductase subunit D of Parafrankia sp. (strain EAN1pec).